The following is a 748-amino-acid chain: Catalase-peroxidase (748 aa).

The tryptophyl-tyrosyl-methioninium (Trp-Tyr) (with M-255) cross-link spans 96–229; sequence WHSAGTYRVA…LAAAHMGLIY (134 aa). The active-site Proton acceptor is the His97. The segment at residues 229 to 255 is a cross-link (tryptophyl-tyrosyl-methioninium (Tyr-Met) (with W-96)); the sequence is YVNPEGPDGNPDPIAAAKDIRTTFGRM. His270 is a heme b binding site.

The protein belongs to the peroxidase family. Peroxidase/catalase subfamily. As to quaternary structure, homodimer or homotetramer. Heme b serves as cofactor. Formation of the three residue Trp-Tyr-Met cross-link is important for the catalase, but not the peroxidase activity of the enzyme.

The protein resides in the cytoplasm. The catalysed reaction is H2O2 + AH2 = A + 2 H2O. It carries out the reaction 2 H2O2 = O2 + 2 H2O. Bifunctional enzyme with both catalase and broad-spectrum peroxidase activity. Plays a crucial role in oxidative stress response during infection. Acts as an antigen and elicits antibody response in P.marneffei-infected AIDS patients, healthy people working in mycological laboratory, and healthy people in an endemic area. The protein is Catalase-peroxidase of Talaromyces marneffei (Penicillium marneffei).